We begin with the raw amino-acid sequence, 167 residues long: Large ribosomal subunit protein bL9 (167 aa).

It belongs to the bacterial ribosomal protein bL9 family.

Its function is as follows. Binds to the 23S rRNA. The chain is Large ribosomal subunit protein bL9 from Nitratidesulfovibrio vulgaris (strain DSM 19637 / Miyazaki F) (Desulfovibrio vulgaris).